Here is a 361-residue protein sequence, read N- to C-terminus: Mitochondrial import receptor subunit TOM40 homolog (361 aa).

Low complexity predominate over residues 1–10 (MGNVLAASSP). The tract at residues 1–71 (MGNVLAASSP…AASAGGTADD (71 aa)) is disordered. Residues 11 to 36 (PAGPPPPPAPPLVGLPPPPPSPPGFT) are compositionally biased toward pro residues. Over residues 40 to 52 (LGGGLGAGAGTGR) the composition is skewed to gly residues. Residues 59 to 71 (GTAAASAGGTADD) show a composition bias toward low complexity.

Belongs to the Tom40 family. As to quaternary structure, forms part of the preprotein translocase complex of the outer mitochondrial membrane (TOM complex) which consists of at least 7 different proteins (TOMM5, TOMM6, TOMM7, TOMM20, TOMM22, TOMM40 and TOMM70). Interacts with mitochondrial targeting sequences. Interacts with TIMM29; linking the TIM22 complex to the TOM complex. Forms a complex with BCAP31 (via C-terminus) which mediates the translocation of components of the mitochondrial membrane respiratory chain NADH dehydrogenase (Complex I) from the cytosol to the mitochondria. Interacts (via N-terminus) with CYP1A1 (via mitochondrial targeting signal); this interaction is required for CYP1A1 translocation across the mitochondrial outer membrane.

It localises to the mitochondrion outer membrane. Its function is as follows. Channel-forming protein essential for import of protein precursors into mitochondria. Plays a role in the assembly of the mitochondrial membrane respiratory chain NADH dehydrogenase (Complex I) by forming a complex with BCAP31 and mediating the translocation of Complex I components from the cytosol to the mitochondria. The polypeptide is Mitochondrial import receptor subunit TOM40 homolog (Bos taurus (Bovine)).